Consider the following 201-residue polypeptide: NADH-quinone oxidoreductase subunit C (201 aa).

It belongs to the complex I 30 kDa subunit family. In terms of assembly, NDH-1 is composed of 14 different subunits. Subunits NuoB, C, D, E, F, and G constitute the peripheral sector of the complex.

It localises to the cell inner membrane. It catalyses the reaction a quinone + NADH + 5 H(+)(in) = a quinol + NAD(+) + 4 H(+)(out). In terms of biological role, NDH-1 shuttles electrons from NADH, via FMN and iron-sulfur (Fe-S) centers, to quinones in the respiratory chain. The immediate electron acceptor for the enzyme in this species is believed to be ubiquinone. Couples the redox reaction to proton translocation (for every two electrons transferred, four hydrogen ions are translocated across the cytoplasmic membrane), and thus conserves the redox energy in a proton gradient. In Mesorhizobium japonicum (strain LMG 29417 / CECT 9101 / MAFF 303099) (Mesorhizobium loti (strain MAFF 303099)), this protein is NADH-quinone oxidoreductase subunit C.